The primary structure comprises 924 residues: Translation initiation factor IF-2 (924 aa).

The segment at 118-325 is disordered; it reads PSTAHREELA…QAPVVGGVRL (208 aa). Composition is skewed to pro residues over residues 150 to 173 and 192 to 201; these read APHP…PGGR and IPRPPAPRPS. Over residues 202 to 212 the composition is skewed to low complexity; that stretch reads ASPSSMSPRPG. Gly residues predominate over residues 229–295; that stretch reads RPGGGRPGAP…GAAGAFGRPG (67 aa). A compositionally biased stretch (basic residues) spans 299–308; that stretch reads RRGRKSKRQK. Residues 420–591 enclose the tr-type G domain; the sequence is VRPPVVTVMG…AVLLTADAAL (172 aa). A G1 region spans residues 429–436; sequence GHVDHGKT. 429 to 436 provides a ligand contact to GTP; the sequence is GHVDHGKT. The G2 stretch occupies residues 454–458; that stretch reads GITQH. A G3 region spans residues 479 to 482; that stretch reads DTPG. GTP contacts are provided by residues 479–483 and 533–536; these read DTPGH and NKID. The G4 stretch occupies residues 533-536; that stretch reads NKID. The interval 569–571 is G5; the sequence is SAK.

Belongs to the TRAFAC class translation factor GTPase superfamily. Classic translation factor GTPase family. IF-2 subfamily.

The protein resides in the cytoplasm. Its function is as follows. One of the essential components for the initiation of protein synthesis. Protects formylmethionyl-tRNA from spontaneous hydrolysis and promotes its binding to the 30S ribosomal subunits. Also involved in the hydrolysis of GTP during the formation of the 70S ribosomal complex. This Mycobacterium leprae (strain Br4923) protein is Translation initiation factor IF-2.